Consider the following 130-residue polypeptide: Small ribosomal subunit protein uS9 (130 aa).

It belongs to the universal ribosomal protein uS9 family.

In Geobacillus sp. (strain WCH70), this protein is Small ribosomal subunit protein uS9.